The primary structure comprises 227 residues: Cytidylate kinase (227 aa).

Residue 12–20 participates in ATP binding; the sequence is GPSGAGKGT.

This sequence belongs to the cytidylate kinase family. Type 1 subfamily.

The protein resides in the cytoplasm. The catalysed reaction is CMP + ATP = CDP + ADP. It carries out the reaction dCMP + ATP = dCDP + ADP. The chain is Cytidylate kinase from Photorhabdus laumondii subsp. laumondii (strain DSM 15139 / CIP 105565 / TT01) (Photorhabdus luminescens subsp. laumondii).